The sequence spans 465 residues: A-type ATP synthase subunit B (465 aa).

The protein belongs to the ATPase alpha/beta chains family. Has multiple subunits with at least A(3), B(3), C, D, E, F, H, I and proteolipid K(x).

The protein resides in the cell membrane. Functionally, component of the A-type ATP synthase that produces ATP from ADP in the presence of a proton gradient across the membrane. The B chain is a regulatory subunit. The sequence is that of A-type ATP synthase subunit B from Thermococcus onnurineus (strain NA1).